Reading from the N-terminus, the 270-residue chain is Putative F-box protein At3g24700 (270 aa).

Residues 1 to 45 (MLTDLPLDLESEILSRVPATSLQRLKTTCKRWYALFRDPRFVKKN) enclose the F-box domain.

In Arabidopsis thaliana (Mouse-ear cress), this protein is Putative F-box protein At3g24700.